The primary structure comprises 557 residues: 2-isopropylmalate synthase (557 aa).

The region spanning 33–307 (PIWCSSDLRD…DPQLDFSDID (275 aa)) is the Pyruvate carboxyltransferase domain. Mg(2+) is bound by residues aspartate 42, histidine 246, histidine 248, and asparagine 282. Residues 439-557 (ANAPYALVSH…SLSQQEAKAA (119 aa)) form a regulatory domain region.

It belongs to the alpha-IPM synthase/homocitrate synthase family. LeuA type 2 subfamily. As to quaternary structure, homodimer. Mg(2+) is required as a cofactor.

The protein resides in the cytoplasm. The enzyme catalyses 3-methyl-2-oxobutanoate + acetyl-CoA + H2O = (2S)-2-isopropylmalate + CoA + H(+). It participates in amino-acid biosynthesis; L-leucine biosynthesis; L-leucine from 3-methyl-2-oxobutanoate: step 1/4. In terms of biological role, catalyzes the condensation of the acetyl group of acetyl-CoA with 3-methyl-2-oxobutanoate (2-ketoisovalerate) to form 3-carboxy-3-hydroxy-4-methylpentanoate (2-isopropylmalate). This chain is 2-isopropylmalate synthase, found in Pseudomonas putida (strain GB-1).